Consider the following 347-residue polypeptide: Suppressor of RNA-mediated gene silencing (347 aa).

The protein belongs to the phytoreovirus non-structural protein 10 family.

In terms of biological role, suppressor of RNA-mediated gene silencing, also known as post-transcriptional gene silencing (PTGS), a mechanism of plant viral defense that limits the accumulation of viral RNAs. This Catharanthus roseus (Madagascar periwinkle) protein is Suppressor of RNA-mediated gene silencing.